A 376-amino-acid polypeptide reads, in one-letter code: Queuine tRNA-ribosyltransferase (376 aa).

The Proton acceptor role is filled by Asp-90. Residues 90–94, Asp-144, Gln-193, and Gly-220 contribute to the substrate site; that span reads DSGGF. The tract at residues 251–257 is RNA binding; the sequence is GVGTPED. Catalysis depends on Asp-270, which acts as the Nucleophile. The segment at 275–279 is RNA binding; important for wobble base 34 recognition; the sequence is TRNAR. The Zn(2+) site is built by Cys-308, Cys-310, Cys-313, and His-339.

Belongs to the queuine tRNA-ribosyltransferase family. As to quaternary structure, homodimer. Within each dimer, one monomer is responsible for RNA recognition and catalysis, while the other monomer binds to the replacement base PreQ1. The cofactor is Zn(2+).

It carries out the reaction 7-aminomethyl-7-carbaguanine + guanosine(34) in tRNA = 7-aminomethyl-7-carbaguanosine(34) in tRNA + guanine. It participates in tRNA modification; tRNA-queuosine biosynthesis. In terms of biological role, catalyzes the base-exchange of a guanine (G) residue with the queuine precursor 7-aminomethyl-7-deazaguanine (PreQ1) at position 34 (anticodon wobble position) in tRNAs with GU(N) anticodons (tRNA-Asp, -Asn, -His and -Tyr). Catalysis occurs through a double-displacement mechanism. The nucleophile active site attacks the C1' of nucleotide 34 to detach the guanine base from the RNA, forming a covalent enzyme-RNA intermediate. The proton acceptor active site deprotonates the incoming PreQ1, allowing a nucleophilic attack on the C1' of the ribose to form the product. After dissociation, two additional enzymatic reactions on the tRNA convert PreQ1 to queuine (Q), resulting in the hypermodified nucleoside queuosine (7-(((4,5-cis-dihydroxy-2-cyclopenten-1-yl)amino)methyl)-7-deazaguanosine). In Cupriavidus pinatubonensis (strain JMP 134 / LMG 1197) (Cupriavidus necator (strain JMP 134)), this protein is Queuine tRNA-ribosyltransferase.